The chain runs to 380 residues: MSKRDFYEVLGVGRDAGERDIKKAYKRLAMKFHPDRNQEADATEKFKEVKTAYEILTDPQKKAAYDQYGHAAFEQGSGGGGYGGGGGADFGDIFGDVFGDIFGGAGGGRRQQQRAQRGSDLRYNMELTLEEAVRGCSKEIRVPTLVGCDSCDGSGAKRGSSATTCGTCHGQGQVQMRQGFFAVQQACPHCHGRGKIIKDPCNSCHGQGRVEKTKTLSVKIPAGVDTGDRIRLSGEGEAGEFGAPAGDLYVQVHVAEHSIFERDGNNLYCEVPVSFTMAAVGGEVEVPTLNGRVNLKVPSETQTGRMFRMRGKGVKSVRGGAVGDLICKLVVETPVNLSSHQKELLKELEESFGGKAAGKHKPKSEGFFNGVKKFFDDLTG.

Residues 5–69 (DFYEVLGVGR…QKKAAYDQYG (65 aa)) form the J domain. The CR-type zinc-finger motif lies at 135-213 (GCSKEIRVPT…CHGQGRVEKT (79 aa)). 8 residues coordinate Zn(2+): cysteine 148, cysteine 151, cysteine 165, cysteine 168, cysteine 187, cysteine 190, cysteine 201, and cysteine 204. 4 CXXCXGXG motif repeats span residues 148–155 (CDSCDGSG), 165–172 (CGTCHGQG), 187–194 (CPHCHGRG), and 201–208 (CNSCHGQG).

It belongs to the DnaJ family. Homodimer. It depends on Zn(2+) as a cofactor.

Its subcellular location is the cytoplasm. Participates actively in the response to hyperosmotic and heat shock by preventing the aggregation of stress-denatured proteins and by disaggregating proteins, also in an autonomous, DnaK-independent fashion. Unfolded proteins bind initially to DnaJ; upon interaction with the DnaJ-bound protein, DnaK hydrolyzes its bound ATP, resulting in the formation of a stable complex. GrpE releases ADP from DnaK; ATP binding to DnaK triggers the release of the substrate protein, thus completing the reaction cycle. Several rounds of ATP-dependent interactions between DnaJ, DnaK and GrpE are required for fully efficient folding. Also involved, together with DnaK and GrpE, in the DNA replication of plasmids through activation of initiation proteins. The chain is Chaperone protein DnaJ from Photobacterium profundum (strain SS9).